A 334-amino-acid polypeptide reads, in one-letter code: N-acetyl-gamma-glutamyl-phosphate reductase (334 aa).

The active site involves Cys154.

This sequence belongs to the NAGSA dehydrogenase family. Type 1 subfamily.

It is found in the cytoplasm. The enzyme catalyses N-acetyl-L-glutamate 5-semialdehyde + phosphate + NADP(+) = N-acetyl-L-glutamyl 5-phosphate + NADPH + H(+). It functions in the pathway amino-acid biosynthesis; L-arginine biosynthesis; N(2)-acetyl-L-ornithine from L-glutamate: step 3/4. In terms of biological role, catalyzes the NADPH-dependent reduction of N-acetyl-5-glutamyl phosphate to yield N-acetyl-L-glutamate 5-semialdehyde. In Escherichia coli (strain K12), this protein is N-acetyl-gamma-glutamyl-phosphate reductase.